The sequence spans 180 residues: Probable RNA 2'-phosphotransferase (180 aa).

This sequence belongs to the KptA/TPT1 family.

Removes the 2'-phosphate from RNA via an intermediate in which the phosphate is ADP-ribosylated by NAD followed by a presumed transesterification to release the RNA and generate ADP-ribose 1''-2''-cyclic phosphate (APPR&gt;P). May function as an ADP-ribosylase. This chain is Probable RNA 2'-phosphotransferase, found in Thermococcus kodakarensis (strain ATCC BAA-918 / JCM 12380 / KOD1) (Pyrococcus kodakaraensis (strain KOD1)).